The primary structure comprises 415 residues: uncharacterized protein (415 aa).

The [4Fe-4S] cluster site is built by Cys-85, Cys-91, Cys-94, and Cys-175. Gln-248, Tyr-276, Glu-297, and Asn-344 together coordinate S-adenosyl-L-methionine. Cys-371 functions as the Nucleophile in the catalytic mechanism.

It belongs to the class I-like SAM-binding methyltransferase superfamily. RNA M5U methyltransferase family.

This is an uncharacterized protein from Leptospira interrogans serogroup Icterohaemorrhagiae serovar copenhageni (strain Fiocruz L1-130).